We begin with the raw amino-acid sequence, 275 residues long: U6 snRNA phosphodiesterase 1 (275 aa).

Residues 1-25 form a disordered region; it reads MEFLKHYEDDEDQDDENNTKDENVN. His-122 functions as the Proton acceptor in the catalytic mechanism. AMP contacts are provided by residues 122–124, Tyr-206, and 208–214; these read HIS and NPEPHLS. Residues Tyr-206 and 210–214 each bind UMP; that span reads EPHLS. The active-site Proton donor is the His-212.

The protein belongs to the 2H phosphoesterase superfamily. USB1 family.

It localises to the nucleus. It carries out the reaction a 3'-end uridylyl-uridine-RNA = a 3'-end 2',3'-cyclophospho-uridine-RNA + uridine. 3'-5' RNA exonuclease that trims the 3' end of oligo(U) tracts of the pre-U6 small nuclear RNA (snRNA) molecule, leading to the formation of a mature U6 snRNA 3' end-terminated with a 2',3'-cyclic phosphate. Participates in the U6 snRNA 3' end processing that prevents U6 snRNA degradation. The protein is U6 snRNA phosphodiesterase 1 of Dictyostelium discoideum (Social amoeba).